Here is a 141-residue protein sequence, read N- to C-terminus: Large ribosomal subunit protein uL11 (141 aa).

The protein belongs to the universal ribosomal protein uL11 family. As to quaternary structure, part of the ribosomal stalk of the 50S ribosomal subunit. Interacts with L10 and the large rRNA to form the base of the stalk. L10 forms an elongated spine to which L12 dimers bind in a sequential fashion forming a multimeric L10(L12)X complex. One or more lysine residues are methylated.

Forms part of the ribosomal stalk which helps the ribosome interact with GTP-bound translation factors. The polypeptide is Large ribosomal subunit protein uL11 (Helicobacter acinonychis (strain Sheeba)).